We begin with the raw amino-acid sequence, 550 residues long: Chaperonin GroEL (550 aa).

Residues 30-33 (TLGP), K51, 87-91 (DGTTT), G415, and D497 contribute to the ATP site.

Belongs to the chaperonin (HSP60) family. Forms a cylinder of 14 subunits composed of two heptameric rings stacked back-to-back. Interacts with the co-chaperonin GroES.

It localises to the cytoplasm. It carries out the reaction ATP + H2O + a folded polypeptide = ADP + phosphate + an unfolded polypeptide.. In terms of biological role, together with its co-chaperonin GroES, plays an essential role in assisting protein folding. The GroEL-GroES system forms a nano-cage that allows encapsulation of the non-native substrate proteins and provides a physical environment optimized to promote and accelerate protein folding. The polypeptide is Chaperonin GroEL (Yersinia enterocolitica).